Consider the following 129-residue polypeptide: Histone H2A (129 aa).

Belongs to the histone H2A family. In terms of assembly, the nucleosome is a histone octamer containing two molecules each of H2A, H2B, H3 and H4 assembled in one H3-H4 heterotetramer and two H2A-H2B heterodimers. The octamer wraps approximately 147 bp of DNA.

The protein localises to the nucleus. Its subcellular location is the chromosome. Its function is as follows. Core component of nucleosome. Nucleosomes wrap and compact DNA into chromatin, limiting DNA accessibility to the cellular machineries which require DNA as a template. Histones thereby play a central role in transcription regulation, DNA repair, DNA replication and chromosomal stability. DNA accessibility is regulated via a complex set of post-translational modifications of histones, also called histone code, and nucleosome remodeling. The polypeptide is Histone H2A (H2A-II) (Chlamydomonas reinhardtii (Chlamydomonas smithii)).